A 139-amino-acid chain; its full sequence is Acidic phospholipase A2 4 (139 aa).

Positions 1–16 (MRTLWIVAVWLVGVEG) are cleaved as a signal peptide. Disulfide bonds link cysteine 42/cysteine 131, cysteine 44/cysteine 60, cysteine 59/cysteine 111, cysteine 65/cysteine 139, cysteine 66/cysteine 104, cysteine 73/cysteine 97, and cysteine 91/cysteine 102. Ca(2+)-binding residues include tyrosine 43, glycine 45, and glycine 47. Histidine 63 is a catalytic residue. Aspartate 64 contributes to the Ca(2+) binding site. Residue aspartate 105 is part of the active site.

It belongs to the phospholipase A2 family. Group II subfamily. D49 sub-subfamily. It depends on Ca(2+) as a cofactor. Expressed by the venom gland.

The protein resides in the secreted. The catalysed reaction is a 1,2-diacyl-sn-glycero-3-phosphocholine + H2O = a 1-acyl-sn-glycero-3-phosphocholine + a fatty acid + H(+). PLA2 catalyzes the calcium-dependent hydrolysis of the 2-acyl groups in 3-sn-phosphoglycerides. In Echis carinatus sochureki (Saw-scaled viper), this protein is Acidic phospholipase A2 4.